Here is a 434-residue protein sequence, read N- to C-terminus: Enolase 2 (434 aa).

Q171 is a binding site for (2R)-2-phosphoglycerate. The active-site Proton donor is E213. The Mg(2+) site is built by D250, E293, and D320. 4 residues coordinate (2R)-2-phosphoglycerate: K345, R374, S375, and K396. Catalysis depends on K345, which acts as the Proton acceptor.

This sequence belongs to the enolase family. It depends on Mg(2+) as a cofactor.

It is found in the cytoplasm. The protein localises to the secreted. Its subcellular location is the cell surface. It catalyses the reaction (2R)-2-phosphoglycerate = phosphoenolpyruvate + H2O. It participates in carbohydrate degradation; glycolysis; pyruvate from D-glyceraldehyde 3-phosphate: step 4/5. Its function is as follows. Catalyzes the reversible conversion of 2-phosphoglycerate (2-PG) into phosphoenolpyruvate (PEP). It is essential for the degradation of carbohydrates via glycolysis. The sequence is that of Enolase 2 from Streptomyces coelicolor (strain ATCC BAA-471 / A3(2) / M145).